We begin with the raw amino-acid sequence, 167 residues long: Endoribonuclease YbeY (167 aa).

Zn(2+) contacts are provided by His131, His135, and His141.

The protein belongs to the endoribonuclease YbeY family. Zn(2+) is required as a cofactor.

The protein localises to the cytoplasm. In terms of biological role, single strand-specific metallo-endoribonuclease involved in late-stage 70S ribosome quality control and in maturation of the 3' terminus of the 16S rRNA. The chain is Endoribonuclease YbeY from Rickettsia conorii (strain ATCC VR-613 / Malish 7).